A 208-amino-acid chain; its full sequence is NAD(P)H-quinone oxidoreductase subunit I (208 aa).

4Fe-4S ferredoxin-type domains are found at residues 55–84 (GRIH…VDWV) and 95–124 (RNYS…MTEE). The [4Fe-4S] cluster site is built by cysteine 64, cysteine 67, cysteine 70, cysteine 74, cysteine 104, cysteine 107, cysteine 110, and cysteine 114.

Belongs to the complex I 23 kDa subunit family. NDH-1 is composed of at least 11 different subunits. [4Fe-4S] cluster serves as cofactor.

The protein resides in the cellular thylakoid membrane. The catalysed reaction is a plastoquinone + NADH + (n+1) H(+)(in) = a plastoquinol + NAD(+) + n H(+)(out). It carries out the reaction a plastoquinone + NADPH + (n+1) H(+)(in) = a plastoquinol + NADP(+) + n H(+)(out). In terms of biological role, NDH-1 shuttles electrons from an unknown electron donor, via FMN and iron-sulfur (Fe-S) centers, to quinones in the respiratory and/or the photosynthetic chain. The immediate electron acceptor for the enzyme in this species is believed to be plastoquinone. Couples the redox reaction to proton translocation, and thus conserves the redox energy in a proton gradient. The polypeptide is NAD(P)H-quinone oxidoreductase subunit I (Prochlorococcus marinus (strain MIT 9312)).